The following is a 785-amino-acid chain: Arrestin domain-containing protein D (785 aa).

Disordered regions lie at residues 29 to 69, 172 to 205, 326 to 367, 435 to 486, and 608 to 642; these read QNES…SKYP, ILLPTTTSTQNSTLSPTLLSSNLNSKSSTTTTTT, SNNS…ITNN, SNSN…SDHN, and YSSSGSGSGSGSSNSNSNHSSSNYLNEQEENLDEQ. Over residues 173–205 the composition is skewed to low complexity; that stretch reads LLPTTTSTQNSTLSPTLLSSNLNSKSSTTTTTT. Residues 435 to 450 show a composition bias toward low complexity; sequence SNSNSSSSGGSSNKNN. The span at 466 to 478 shows a compositional bias: basic residues; sequence SNKKSSGSHRYHY. Residues 608-633 show a composition bias toward low complexity; that stretch reads YSSSGSGSGSGSSNSNSNHSSSNYLN. The FYVE-type zinc finger occupies 682 to 742; sequence ESSITNCNLC…ICLMCFDAVK (61 aa). Residues Cys-688, Cys-691, Cys-704, Cys-707, Cys-712, Cys-715, Cys-734, and Cys-737 each coordinate Zn(2+). The RING-type; degenerate zinc finger occupies 688 to 738; the sequence is CNLCDNTFTIIRRTHHCRACGGVFCEACSNQKVCLYGFGVNNKVRICLMCF.

The protein belongs to the arrestin family.

The protein is Arrestin domain-containing protein D (adcD) of Dictyostelium discoideum (Social amoeba).